The following is a 1102-amino-acid chain: Avirulence protein AvrXa10 (1102 aa).

Disordered regions lie at residues 1 to 68 and 127 to 151; these read MDPI…SAGS and ARPP…PAAQ. The segment covering 130 to 140 has biased composition (basic residues); it reads PRAKPAPRRRA. Residues 141–151 are compositionally biased toward low complexity; sequence AQPSDASPAAQ. Core repeat repeat units follow at residues 288-321, 322-355, 356-389, 390-423, 424-457, 458-491, 492-525, 526-559, 560-593, 594-627, 628-661, 662-695, 696-729, 730-763, and 764-797; these read LTPD…QAHG, LTPD…QDHG, LTPD…QTHG, LTPA…QDHG, and LTPV…QDHG. Residues 798-809 form a Core repeat 15.5 repeat; that stretch reads LTPDQVVAIASN. A Nuclear localization sequence A (NLSA) motif is present at residues 951-954; it reads KRVK. Residues 978-990 show a composition bias toward basic and acidic residues; it reads DLDAPSPMHEGDQ. A disordered region spans residues 978–1021; sequence DLDAPSPMHEGDQTRASSRKRSRSDRAVTGPSTQQSFEVRVPEQ. The Nuclear localization sequence B (NLSB) motif lies at 997–1000; that stretch reads KRSR. A Nuclear localization sequence C (NLSC) motif is present at residues 1034 to 1037; sequence KRPR. Residues 1063-1093 are activation domain; sequence WEQDAAPFAGAADDFPAFNEEELAWLMELLP.

Belongs to the transcription activator-like effector (TALE) family.

It is found in the secreted. The protein resides in the host nucleus. Avirulence protein. Induces the hypersensitive response (HR)in rice plants carrying the resistance gene Xa10. Activity depends on the presence of the core repeat domains; replacement with repeat domains from other proteins (AvrBs3 of X.euvesicatoria (AC P14727) or AvrXa7 of this organism) does not elicit the HR. Probably acts as a transcription factor in its host plant (rice) to induce plant resistance or disease. The chain is Avirulence protein AvrXa10 from Xanthomonas oryzae pv. oryzae.